Here is a 194-residue protein sequence, read N- to C-terminus: A-type ATP synthase subunit E (194 aa).

This sequence belongs to the V-ATPase E subunit family. Has multiple subunits with at least A(3), B(3), C, D, E, F, H, I and proteolipid K(x).

The protein resides in the cell membrane. Functionally, component of the A-type ATP synthase that produces ATP from ADP in the presence of a proton gradient across the membrane. In Saccharolobus islandicus (strain Y.N.15.51 / Yellowstone #2) (Sulfolobus islandicus), this protein is A-type ATP synthase subunit E.